The primary structure comprises 212 residues: Protein-L-isoaspartate O-methyltransferase (212 aa).

Ser62 is an active-site residue.

This sequence belongs to the methyltransferase superfamily. L-isoaspartyl/D-aspartyl protein methyltransferase family.

The protein localises to the cytoplasm. It carries out the reaction [protein]-L-isoaspartate + S-adenosyl-L-methionine = [protein]-L-isoaspartate alpha-methyl ester + S-adenosyl-L-homocysteine. Functionally, catalyzes the methyl esterification of L-isoaspartyl residues in peptides and proteins that result from spontaneous decomposition of normal L-aspartyl and L-asparaginyl residues. It plays a role in the repair and/or degradation of damaged proteins. In Pseudoalteromonas translucida (strain TAC 125), this protein is Protein-L-isoaspartate O-methyltransferase.